Consider the following 249-residue polypeptide: UPF0758 protein BMEI0718 (249 aa).

Residues 1 to 34 are disordered; the sequence is MAKKKDTPGDGEFPGFSDTLQRTPKLEKPHYAGH. The segment covering 24-34 has biased composition (basic and acidic residues); that stretch reads PKLEKPHYAGH. Positions 127-249 constitute an MPN domain; the sequence is VLGSWDKVIN…HASLRSLRLI (123 aa). Zn(2+)-binding residues include histidine 198, histidine 200, and aspartate 211. The JAMM motif signature appears at 198-211; the sequence is HNHPSGDPTPSRAD.

This sequence belongs to the UPF0758 family.

The sequence is that of UPF0758 protein BMEI0718 from Brucella melitensis biotype 1 (strain ATCC 23456 / CCUG 17765 / NCTC 10094 / 16M).